Here is a 488-residue protein sequence, read N- to C-terminus: Transcriptional coactivator YAP1 (488 aa).

Over residues 1–21 (MEPAQQPPPQPAPQGPAPPSV) the composition is skewed to pro residues. The segment at 1 to 47 (MEPAQQPPPQPAPQGPAPPSVSPAGTPAAPPAPPAGHQVVHVRGDSE) is disordered. Serine 46 carries the post-translational modification Phosphoserine. Phosphothreonine is present on threonine 48. The stretch at 71–85 (MRLRKLPDSFFKPPE) forms a coiled coil. Lysine 75 carries the post-translational modification N6-lactoyllysine. The disordered stretch occupies residues 76–99 (LPDSFFKPPEPKSHSRQASTDAGT). Serine 90 and serine 94 each carry phosphoserine. Threonine 95 carries the post-translational modification Phosphothreonine. Threonine 104 carries the post-translational modification Phosphothreonine; by MAPK8 and MAPK9. Serine 112, serine 113, serine 116, and serine 123 each carry phosphoserine. Serine 149 is subject to Phosphoserine; by LATS1 and LATS2. WW domains follow at residues 156–189 (VPLP…DPRK) and 215–248 (GPLP…DPRL). 2 disordered regions span residues 261 to 293 (SAPV…QIQL) and 339 to 393 (TLEQ…SSYS). Serine 274 is modified (phosphoserine). The transactivation domain stretch occupies residues 276–488 (QGGVLGGGSS…LDKESFLTWL (213 aa)). A coiled-coil region spans residues 283 to 344 (GSSNQQQQIQ…SQLPTLEQDG (62 aa)). Polar residues predominate over residues 348 to 376 (NAVSSPGMSQELRTMTTNSSDPFLNSGTY). Phosphoserine; by MAPK8 and MAPK9 is present on serine 352. Phosphoserine occurs at positions 356, 366, 367, and 373. The residue at position 382 (serine 382) is a Phosphoserine; by LATS1 and LATS2. The span at 384-393 (DSGLSMSSYS) shows a compositional bias: polar residues. Phosphoserine; by CK1 occurs at positions 385 and 388. Tyrosine 392 carries the phosphotyrosine; by ABL1 modification. Threonine 397 bears the Phosphothreonine; by MAPK8 and MAPK9 mark.

The protein belongs to the YAP1 family. As to quaternary structure, part of a complex when phosphorylated that contains DSG3, PKP1, YAP1 and YWHAG; the complex is required for localization of DSG3 and YAP1 to the cell membrane in keratinocytes. Binds to the SH3 domain of the YES kinase. Binds to WBP1 and WBP2. Binds, in vitro, through the WW1 domain, to neural isoforms of ENAH that contain the PPSY motif. The phosphorylated form interacts with YWHAB. Interacts (via WW domains) with LATS1 (via PPxY motif 2). Interacts with LATS2. Interacts (via WW domain 1) with isoform JM-A of ERBB4 (via PPxY motif 2). Interacts with TEAD1, TEAD2 and TEAD3. Interacts with TP73 and HCK. Interacts with RUNX1. Interacts with TEAD4. Interacts (via WW domains) with PTPN14 (via PPxY motif 2); this interaction leads to the cytoplasmic sequestration of YAP1 and inhibits its transcriptional coactivator activity. Interacts (when phosphorylated at Ser-112) with SMAD2, SMAD3 and WWTR1. Interacts with PRRG2 (via cytoplasmic domain). Interacts (via WW domains) with PRRG4 (via cytoplasmic domain). Interacts (phosphorylated) with CLDN18; the interaction sequesters YAP1 away from the nucleus and thereby restricts transcription of YAP1 target genes. Interacts with SMAD1. Interacts with AMOT; the interaction facilitates translocation of YAP1 to the cytoplasm and tight junctions. Interacts with AMOTL2, the interaction is required for ubiquitination of AMOTL2 and localization of YAP1 to tight junctions. In terms of processing, phosphorylated by LATS1 and LATS2; leading to cytoplasmic translocation and inactivation. Phosphorylated by ABL1; leading to YAP1 stabilization, enhanced interaction with TP73 and recruitment onto proapoptotic genes; in response to DNA damage. Phosphorylation at Ser-385 and Ser-388 by CK1 is triggered by previous phosphorylation at Ser-382 by LATS proteins and leads to YAP1 ubiquitination by SCF(beta-TRCP) E3 ubiquitin ligase and subsequent degradation. Phosphorylated at Thr-104, Ser-123, Ser-352 and Thr-397 by MAPK8/JNK1 and MAPK9/JNK2, which is required for the regulation of apoptosis by YAP1. Lactylation by AARS1 promotes nuclear localization and stabilization of YAP1, leading to increased Hippo signaling pathway. Delactylated by SIRT1. Post-translationally, ubiquitinated by SCF(beta-TRCP) E3 ubiquitin ligase. As to expression, isoforms lacking the transactivation domain seen in striatal neurons (at protein level). Ubiquitous. Isoform 2 is expressed at higher levels in the neural tissues. In the embryo, it is expressed in brain, eye, and the maxillary and frontonasal components of the primary palate.

The protein resides in the cytoplasm. The protein localises to the nucleus. It is found in the cell junction. Its subcellular location is the tight junction. It localises to the cell membrane. In terms of biological role, transcriptional regulator with dual roles as a coactivator and corepressor. Critical downstream regulatory target in the Hippo signaling pathway, crucial for organ size control and tumor suppression by restricting proliferation and promoting apoptosis. The Hippo signaling pathway core involves a kinase cascade featuring STK3/MST2 and STK4/MST1, along with its regulatory partner SAV1, which phosphorylates and activates LATS1/2 in complex with their regulatory protein, MOB1. This activation leads to the phosphorylation and inactivation of the YAP1 oncoprotein and WWTR1/TAZ. Phosphorylation of YAP1 by LATS1/2 prevents its nuclear translocation, thereby regulating the expression of its target genes. The transcriptional regulation of gene expression requires TEAD transcription factors and modulates cell growth, anchorage-independent growth, and induction of epithelial-mesenchymal transition (EMT). Plays a key role in tissue tension and 3D tissue shape by regulating the cortical actomyosin network, acting via ARHGAP18, a Rho GTPase activating protein that suppresses F-actin polymerization. It also suppresses ciliogenesis by acting as a transcriptional corepressor of TEAD4 target genes AURKA and PLK1. In conjunction with WWTR1, regulates TGFB1-dependent SMAD2 and SMAD3 nuclear accumulation. Synergizes with WBP2 to enhance PGR activity. The protein is Transcriptional coactivator YAP1 (Yap1) of Mus musculus (Mouse).